The primary structure comprises 477 residues: Argininosuccinate lyase (477 aa).

Belongs to the lyase 1 family. Argininosuccinate lyase subfamily.

The protein resides in the cytoplasm. The catalysed reaction is 2-(N(omega)-L-arginino)succinate = fumarate + L-arginine. Its pathway is amino-acid biosynthesis; L-arginine biosynthesis; L-arginine from L-ornithine and carbamoyl phosphate: step 3/3. The protein is Argininosuccinate lyase of Corynebacterium diphtheriae (strain ATCC 700971 / NCTC 13129 / Biotype gravis).